The sequence spans 210 residues: Large ribosomal subunit protein uL4 (210 aa).

The interval 49-76 (HCTKTRSEVSGGGKKPWRQKHTGRARHG) is disordered. A compositionally biased stretch (basic residues) spans 63 to 76 (KPWRQKHTGRARHG).

This sequence belongs to the universal ribosomal protein uL4 family. Part of the 50S ribosomal subunit.

One of the primary rRNA binding proteins, this protein initially binds near the 5'-end of the 23S rRNA. It is important during the early stages of 50S assembly. It makes multiple contacts with different domains of the 23S rRNA in the assembled 50S subunit and ribosome. Functionally, forms part of the polypeptide exit tunnel. This chain is Large ribosomal subunit protein uL4, found in Thermodesulfovibrio yellowstonii (strain ATCC 51303 / DSM 11347 / YP87).